We begin with the raw amino-acid sequence, 141 residues long: U1 small nuclear ribonucleoprotein C (141 aa).

The Matrin-type zinc finger occupies 4-36 (YYCEYCDKYLTHDSPSVRKSHTIGKVHQQAVTL). The tract at residues 69 to 141 (LLPPNMVPGQ…SNSPPSNNDQ (73 aa)) is disordered. The span at 83–97 (MMPPGQFPFPPPPGQ) shows a compositional bias: pro residues. Low complexity-rich tracts occupy residues 100-110 (GGMPPHQQQPM) and 124-141 (QQSA…NNDQ).

The protein belongs to the U1 small nuclear ribonucleoprotein C family. As to quaternary structure, component of the U1 snRNP. The U1 snRNP is composed of the U1 snRNA and the 7 core Sm proteins SNRPB, SNRPD1, SNRPD2, SNRPD3, SNRPE, SNRPF and SNRPG that assemble in a heptameric protein ring on the Sm site of the small nuclear RNA to form the core snRNP, and at least 3 U1 snRNP-specific proteins SNRNP70/U1-70K, SNRPA/U1-A and SNRPC/U1-C. SNRPC/U1-C interacts with U1 snRNA and the 5' splice-site region of the pre-mRNA.

The protein resides in the nucleus. Its function is as follows. Component of the spliceosomal U1 snRNP, which is essential for recognition of the pre-mRNA 5' splice-site and the subsequent assembly of the spliceosome. SNRPC/U1-C is directly involved in initial 5' splice-site recognition for both constitutive and regulated alternative splicing. The interaction with the 5' splice-site seems to precede base-pairing between the pre-mRNA and the U1 snRNA. Stimulates commitment or early (E) complex formation by stabilizing the base pairing of the 5' end of the U1 snRNA and the 5' splice-site region. The sequence is that of U1 small nuclear ribonucleoprotein C from Heterostelium pallidum (strain ATCC 26659 / Pp 5 / PN500) (Cellular slime mold).